The following is a 261-amino-acid chain: Small ribosomal subunit protein uS2 (261 aa).

Ser-2 is modified (N-acetylserine). Residues Ala-214–Trp-261 are disordered. The span at Asp-222–Trp-244 shows a compositional bias: acidic residues. The segment covering Ala-245–Trp-261 has biased composition (low complexity).

This sequence belongs to the universal ribosomal protein uS2 family. Component of the small ribosomal subunit. Mature ribosomes consist of a small (40S) and a large (60S) subunit. The 40S subunit contains about 33 different proteins and 1 molecule of RNA (18S). The 60S subunit contains about 49 different proteins and 3 molecules of RNA (25S, 5.8S and 5S). Interacts with RPS21.

The protein resides in the cytoplasm. Functionally, required for the assembly and/or stability of the 40S ribosomal subunit. Required for the processing of the 20S rRNA-precursor to mature 18S rRNA in a late step of the maturation of 40S ribosomal subunits. This chain is Small ribosomal subunit protein uS2, found in Debaryomyces hansenii (strain ATCC 36239 / CBS 767 / BCRC 21394 / JCM 1990 / NBRC 0083 / IGC 2968) (Yeast).